Reading from the N-terminus, the 239-residue chain is Ribonuclease 3 (239 aa).

Residues Arg-12–Gly-137 form the RNase III domain. Glu-50 lines the Mg(2+) pocket. The active site involves Asp-54. The Mg(2+) site is built by Asp-123 and Glu-126. Glu-126 is a catalytic residue. In terms of domain architecture, DRBM spans Asp-162–Ile-231.

This sequence belongs to the ribonuclease III family. As to quaternary structure, homodimer. Requires Mg(2+) as cofactor.

Its subcellular location is the cytoplasm. The enzyme catalyses Endonucleolytic cleavage to 5'-phosphomonoester.. Digests double-stranded RNA. Involved in the processing of primary rRNA transcript to yield the immediate precursors to the large and small rRNAs (23S and 16S). Processes some mRNAs, and tRNAs when they are encoded in the rRNA operon. Processes pre-crRNA and tracrRNA of type II CRISPR loci if present in the organism. The protein is Ribonuclease 3 of Rhizobium rhizogenes (strain K84 / ATCC BAA-868) (Agrobacterium radiobacter).